The sequence spans 394 residues: Acetate kinase 1 (394 aa).

N8 is a binding site for Mg(2+). K15 provides a ligand contact to ATP. R90 contacts substrate. Residue D147 is the Proton donor/acceptor of the active site. ATP is bound by residues 207–211 (HLGSG) and 282–284 (DMR). E382 contributes to the Mg(2+) binding site.

The protein belongs to the acetokinase family. In terms of assembly, homodimer. Mg(2+) serves as cofactor. It depends on Mn(2+) as a cofactor.

The protein localises to the cytoplasm. The enzyme catalyses acetate + ATP = acetyl phosphate + ADP. Its pathway is metabolic intermediate biosynthesis; acetyl-CoA biosynthesis; acetyl-CoA from acetate: step 1/2. In terms of biological role, catalyzes the formation of acetyl phosphate from acetate and ATP. Can also catalyze the reverse reaction. This is Acetate kinase 1 from Latilactobacillus sakei subsp. sakei (strain 23K) (Lactobacillus sakei subsp. sakei).